A 236-amino-acid polypeptide reads, in one-letter code: 7-cyano-7-deazaguanine synthase (236 aa).

7–17 (CSGGLDSVSLA) lines the ATP pocket. Zn(2+)-binding residues include C185, C193, C196, and C199.

Belongs to the QueC family. Requires Zn(2+) as cofactor.

The catalysed reaction is 7-carboxy-7-deazaguanine + NH4(+) + ATP = 7-cyano-7-deazaguanine + ADP + phosphate + H2O + H(+). The protein operates within purine metabolism; 7-cyano-7-deazaguanine biosynthesis. Functionally, catalyzes the ATP-dependent conversion of 7-carboxy-7-deazaguanine (CDG) to 7-cyano-7-deazaguanine (preQ(0)). This is 7-cyano-7-deazaguanine synthase from Agrobacterium fabrum (strain C58 / ATCC 33970) (Agrobacterium tumefaciens (strain C58)).